Here is a 144-residue protein sequence, read N- to C-terminus: Protection of telomeres protein 1c (144 aa).

It belongs to the telombin family. As to expression, expressed at extremely low levels at the limit of detection.

The protein localises to the nucleus. It is found in the chromosome. The protein resides in the telomere. Functionally, binds specifically single-stranded telomeric DNA with weak affinity. Has probably no function in the regulation of telomere length. The sequence is that of Protection of telomeres protein 1c from Arabidopsis thaliana (Mouse-ear cress).